Here is a 516-residue protein sequence, read N- to C-terminus: rRNA N(6)-adenosine-methyltransferase ZCCHC4 (516 aa).

Zn(2+) is bound by residues C40, H42, C66, C75, C127, C130, H142, and H145. A GRF-type zinc finger spans residues 40–84 (CPHELGPTLLFVKVNQGKEETRRFYACSACRDRKDCNFFQWEDEK). S-adenosyl-L-methionine-binding positions include 174 to 177 (QYLF), R204, D227, 245 to 246 (NM), and D278. The segment at 339 to 360 (QVVDYDNHALYKHGKTGRKQSP) is regulatory loop. Zn(2+)-binding residues include C383, C386, H396, C397, C400, C403, H413, C414, C417, C420, H427, C428, C431, C434, H439, and C441. Residues 398–448 (EHCNSCTSKDGRKWNHCFLCKKCVKPSWIHCSICNHCALPDHSCKGPKDGC) form the DHHC domain. The segment at 446–463 (DGCFICGELDHKRSACPN) adopts a CCHC-type zinc-finger fold. The span at 472-484 (KAVRKQKQRKSNK) shows a compositional bias: basic residues. Positions 472 to 516 (KAVRKQKQRKSNKMKMETTKGQSMNHTSATRKKKRRERTHQYLCS) are disordered. Residues 490–499 (TKGQSMNHTS) are compositionally biased toward polar residues. Basic residues predominate over residues 500–509 (ATRKKKRRER).

It belongs to the ZCCHC4 family. Interacts with components of the ASC-1 complex TRIP4, ASCC1, ASCC2 and ASCC3. Interact with AHCYL1 and AHCYL2. Interact with YTHDC2.

It is found in the cytoplasm. Its subcellular location is the nucleus. The protein resides in the nucleolus. The enzyme catalyses adenosine(4220) in 28S rRNA + S-adenosyl-L-methionine = N(6)-methyladenosine(4220) in 28S rRNA + S-adenosyl-L-homocysteine + H(+). RRNA N6-methyltransferase that specifically methylates the adenine in position 4220 of 28S rRNA. N6-methylation of adenine(4220) in 28S rRNA is required for translation. In Bos taurus (Bovine), this protein is rRNA N(6)-adenosine-methyltransferase ZCCHC4.